Here is an 898-residue protein sequence, read N- to C-terminus: MAAEHPFKNILTTLPKPGGGEYGKFYSLPALNDPRIDKLPYSIRILLESAIRNCDNFQVNQNDVEKIIDWENTSPKLAEIPFKPARVLLQDFTGVPAVVDLAAMRDAMAKLGSDANKINPLVPVDLVIDHSVQVDVARSPNAVQSNMELEFKRNNERFGFLKWGSTAFHNMLVVPPGSGIVHQVNLEYLGRVVFNTDGIMYPDSVVGTDSHTTMIDGLGVAGWGVGGIEAEATMLGQPMSMVLPGVVGFKLTGKLQNGVTATDLVLTVTQMLRKHGVVGKFVEFYGEGMGKLSLADRATIANMSPEYGATMGFFPVDHVTLDYLKLTGRSDETVAMIEAYLRANKMFVDYNEPQTERVYSSYLELDLNEVEPCISGPKRPHDRVLLKEMKSDWHSCLDNRVGFKGFAVPKEQQDKVVKFDFHGQPAELKHGSVVIAAITSCTNTSNPSVMLGAALVAKKACELGLEVKPWVKTSLAPGSGVVTKYLLQSGLQEYLNKQGFHVVGYGCTTCIGNSGDLDESVSAAISENDVVAAAVLSGNRNFEGRVHPLTRANYLASPPLVVAYALAGTVDIDFEKEPIGVGKDGKEVFFRDIWPSTEEIAEVVQSSVLPDMFKSTYEAITKGNPMWNQLTVPEASLYSWDPNSTYIHEPPYFKDMTMSPPGPHGVKNAYCLLNFGDSITTDHISPAGSIHKDSPAAKYLLERGVDRKDFNSYGSRRGNDEVMARGTFANIRIVNKFLNGEVGPKTVHVPTGEKLYVFDAALKYKSEGHDTIVLAGAEYGSGSSRDWAAKGPMLLGVKAVIAKSFERIHRSNLVGMGIIPLCFKAGEDADSLGLTGHERYTIDLPTNVSEIRPGQDITVTTDNGKSFTCTLRFDTEVELAYFNHGGILPYVIRNLAQN.

Residues Gln90 and 209–211 (DSH) contribute to the substrate site. Positions 441, 507, and 510 each coordinate [4Fe-4S] cluster. Residues Arg540, Arg545, Arg703, and 784-785 (SR) each bind substrate.

The protein belongs to the aconitase/IPM isomerase family. Requires [4Fe-4S] cluster as cofactor.

It localises to the cytoplasm. It catalyses the reaction citrate = D-threo-isocitrate. It participates in carbohydrate metabolism; glyoxylate and dicarboxylate metabolism. Catalyzes the isomerization of citrate to isocitrate via cis-aconitate. The protein is Putative aconitate hydratase, cytoplasmic of Oryza sativa subsp. japonica (Rice).